The following is a 1279-amino-acid chain: Maestro heat-like repeat-containing protein family member 7 (1279 aa).

The segment at 1 to 145 (MALSRGTSLI…NSSRPCSEDV (145 aa)) is disordered. Residues 39–61 (PDLALAPPPEHALALTPALHPAL) show a composition bias toward low complexity. Polar residues-rich tracts occupy residues 71-106 (PVSN…NHTS) and 124-140 (PSST…SSRP). N-linked (GlcNAc...) asparagine glycosylation is found at Asn200, Asn210, Asn255, Asn267, and Asn296. Position 356 is a phosphoserine (Ser356). An N-linked (GlcNAc...) asparagine glycan is attached at Asn541. 2 consecutive transmembrane segments (helical) span residues 548–568 (TLVT…LLLG) and 722–742 (LLPI…ALLM). HEAT repeat units follow at residues 913 to 950 (QELC…MEQV), 992 to 1029 (AKVQ…GQGK), 1035 to 1072 (AVYV…KLQT), and 1080 to 1117 (EQLT…FMNW).

The protein localises to the membrane. This is Maestro heat-like repeat-containing protein family member 7 (Mroh7) from Mus musculus (Mouse).